A 384-amino-acid chain; its full sequence is Aryl-alcohol dehydrogenase GME11368 (384 aa).

Asp69 is an NADP(+) binding site. Tyr74 acts as the Proton donor in catalysis. NADP(+) is bound by residues 177 to 178 (SD), Gln203, and 301 to 309 (RKPEHLKAN).

This sequence belongs to the aldo/keto reductase family. Aldo/keto reductase 2 subfamily.

It functions in the pathway secondary metabolite biosynthesis. In terms of biological role, aryl-alcohol dehydrogenase; part of the gene cluster that mediates the biosynthesis of dibenzodioxocinones such as pestalotiollide B, a novel class of inhibitors against cholesterol ester transfer protein (CEPT). The biosynthesis initiates from condensation of acetate and malonate units catalyzed by the non-reducing PKS pks8/GME11356. Pks8/GME11356 lacks a thioesterase (TE) domain, which is important to the cyclizing of the third ring of atrochrysone carboxylic acid, and the esterase GME11355 might play the role of TE and catalyzes the cyclization reaction of the C ring. The lactamase-like protein GME11357 (or other beta-lactamases in Pestalotiopsis microspora) probably hydrolyzes the thioester bond between the ACP of pks8/GME11356 and the intermediate to release atrochrysone carboxylic acid, which is spontaneously dehydrates to form endocrocin anthrone. Endocrocin anthrone is further converted to emodin via the endocrocin intermediate. Emodin is then oxidized by several enzymes such as the Baeyer-Villiger oxidase GME11358, the oxidoreductase GME11367, the short chain dehydrogenase/reductase GME11373, as well as by other oxidoreductases from the cluster, to modify the A and C rings and open the B ring, and finally yield monodictyphenone. The prenyltransferase GME11375 may catalyze the addition reaction between the C5 side chains and the carbon bone of dibenzodioxocinones. The remaining biochemical reactions to the final product dibenzodioxocinones should be methylation catalyzed by methyltransferase GME11366 and reduction and lactonization reaction catalyzed by a series of oxidordeuctases. In Pestalotiopsis microspora, this protein is Aryl-alcohol dehydrogenase GME11368.